Consider the following 90-residue polypeptide: Small ribosomal subunit protein bS16 (90 aa).

This sequence belongs to the bacterial ribosomal protein bS16 family.

The chain is Small ribosomal subunit protein bS16 from Lactobacillus acidophilus (strain ATCC 700396 / NCK56 / N2 / NCFM).